Here is a 610-residue protein sequence, read N- to C-terminus: Zinc metalloproteinase-disintegrin-like BITM06A (610 aa).

The signal sequence occupies residues 1–20; that stretch reads MIQVLLVTICLAAFPYQGSS. The propeptide occupies 21-189; the sequence is IILESGNVND…KKASQLVVTA (169 aa). Positions 198–394 constitute a Peptidase M12B domain; the sequence is RYVELFIVVD…ENPQCILNEP (197 aa). 2 residues coordinate Ca(2+): glutamate 201 and aspartate 285. 3 disulfides stabilise this stretch: cysteine 309-cysteine 389, cysteine 349-cysteine 373, and cysteine 351-cysteine 356. Histidine 334 lines the Zn(2+) pocket. Residue glutamate 335 is part of the active site. Positions 338 and 344 each coordinate Zn(2+). Residue asparagine 372 is glycosylated (N-linked (GlcNAc...) asparagine). Positions 389, 392, 404, 407, 409, 411, 414, and 417 each coordinate Ca(2+). A Disintegrin domain is found at 402–488; sequence PPVCGNELLE…ECPADVFHKN (87 aa). 14 disulfide bridges follow: cysteine 405/cysteine 434, cysteine 416/cysteine 429, cysteine 418/cysteine 424, cysteine 428/cysteine 451, cysteine 442/cysteine 448, cysteine 447/cysteine 473, cysteine 460/cysteine 480, cysteine 467/cysteine 499, cysteine 492/cysteine 504, cysteine 511/cysteine 561, cysteine 526/cysteine 572, cysteine 539/cysteine 549, cysteine 556/cysteine 598, and cysteine 592/cysteine 603. Positions 466–468 match the D/ECD-tripeptide motif; the sequence is ECD. Ca(2+) contacts are provided by aspartate 468, proline 469, glutamate 471, aspartate 483, and valine 484.

Belongs to the venom metalloproteinase (M12B) family. P-III subfamily. P-IIIa sub-subfamily. In terms of assembly, monomer. The cofactor is Zn(2+). In terms of tissue distribution, expressed by the venom gland.

The protein localises to the secreted. In terms of biological role, snake venom metalloproteinase that impairs hemostasis in the envenomed animal. The chain is Zinc metalloproteinase-disintegrin-like BITM06A from Bothrops insularis (Golden lancehead).